A 318-amino-acid chain; its full sequence is Death effector domain-containing protein (318 aa).

One can recognise a DED domain in the interval 25 to 103 (SLHRMFDIVG…RHDLLPYVTL (79 aa)). Disordered stretches follow at residues 128–147 (PRAL…TVPP) and 160–191 (QMCS…KEKQ).

As to quaternary structure, interacts with CASP8, CASP10, KRT8, KRT18, CASP3 and FADD. Homodimerizes and heterodimerizes with DEDD2. Post-translationally, exists predominantly in a mono- or diubiquitinated form. In terms of tissue distribution, widely expressed with highest levels in testis.

The protein resides in the cytoplasm. Its subcellular location is the nucleus. It is found in the nucleolus. In terms of biological role, a scaffold protein that directs CASP3 to certain substrates and facilitates their ordered degradation during apoptosis. May also play a role in mediating CASP3 cleavage of KRT18. Regulates degradation of intermediate filaments during apoptosis. May play a role in the general transcription machinery in the nucleus and might be an important regulator of the activity of GTF3C3. Inhibits DNA transcription in vitro. The polypeptide is Death effector domain-containing protein (DEDD) (Homo sapiens (Human)).